The chain runs to 206 residues: Ribosomal RNA small subunit methyltransferase G (206 aa).

S-adenosyl-L-methionine-binding positions include Gly-74, Leu-79, 125-126 (VE), and Arg-140.

It belongs to the methyltransferase superfamily. RNA methyltransferase RsmG family.

It localises to the cytoplasm. It carries out the reaction guanosine(527) in 16S rRNA + S-adenosyl-L-methionine = N(7)-methylguanosine(527) in 16S rRNA + S-adenosyl-L-homocysteine. Specifically methylates the N7 position of guanine in position 527 of 16S rRNA. The sequence is that of Ribosomal RNA small subunit methyltransferase G from Shewanella baltica (strain OS223).